Reading from the N-terminus, the 400-residue chain is CCA-adding enzyme (400 aa).

Positions 28 and 31 each coordinate ATP. Glycine 28 and arginine 31 together coordinate CTP. Mg(2+) contacts are provided by aspartate 41 and aspartate 43. The ATP site is built by arginine 112, aspartate 155, arginine 158, arginine 161, and arginine 164. CTP-binding residues include arginine 112, aspartate 155, arginine 158, arginine 161, and arginine 164.

It belongs to the tRNA nucleotidyltransferase/poly(A) polymerase family. Bacterial CCA-adding enzyme type 3 subfamily. As to quaternary structure, homodimer. Mg(2+) serves as cofactor.

It carries out the reaction a tRNA precursor + 2 CTP + ATP = a tRNA with a 3' CCA end + 3 diphosphate. It catalyses the reaction a tRNA with a 3' CCA end + 2 CTP + ATP = a tRNA with a 3' CCACCA end + 3 diphosphate. Catalyzes the addition and repair of the essential 3'-terminal CCA sequence in tRNAs without using a nucleic acid template. Adds these three nucleotides in the order of C, C, and A to the tRNA nucleotide-73, using CTP and ATP as substrates and producing inorganic pyrophosphate. tRNA 3'-terminal CCA addition is required both for tRNA processing and repair. Also involved in tRNA surveillance by mediating tandem CCA addition to generate a CCACCA at the 3' terminus of unstable tRNAs. While stable tRNAs receive only 3'-terminal CCA, unstable tRNAs are marked with CCACCA and rapidly degraded. This is CCA-adding enzyme from Staphylococcus aureus (strain MSSA476).